Consider the following 932-residue polypeptide: Protocadherin gamma-A2 (932 aa).

The signal sequence occupies residues 1–28; that stretch reads MAALQKLPHCRKLVLLCFLLATLWEARA. Cadherin domains are found at residues 29–133, 134–242, 243–347, 348–452, 453–562, and 570–682; these read GQIR…APRF, GVEE…APVF, TQPE…APEF, YMTS…APAF, SRTS…APEI, and DGST…EPSA. The Extracellular segment spans residues 29-692; sequence GQIRYSVREE…IPNDSDLTLY (664 aa). N-linked (GlcNAc...) asparagine glycosylation is found at N419 and N545. N685 carries N-linked (GlcNAc...) asparagine glycosylation. The chain crosses the membrane as a helical span at residues 693–713; that stretch reads LVVAVAAVSCVFLAFVIVLLA. Topologically, residues 714–932 are cytoplasmic; that stretch reads HRLRRWHKSR…KKKSGKKEKK (219 aa). 2 disordered regions span residues 798–841 and 902–932; these read LEEE…WPNN and ATLT…KEKK. Over residues 806-841 the composition is skewed to polar residues; it reads FSQQAPPNTDWRFSQAQRPGTSGSQNGDDTGTWPNN. Residues 922–932 show a composition bias toward basic residues; that stretch reads NKKKSGKKEKK.

The protein resides in the cell membrane. Potential calcium-dependent cell-adhesion protein. May be involved in the establishment and maintenance of specific neuronal connections in the brain. The chain is Protocadherin gamma-A2 (PCDHGA2) from Homo sapiens (Human).